Reading from the N-terminus, the 154-residue chain is MLLAYTRLSHIHGNIDDSITLDHDTRKKARIKSTTDTGIDIGVFLERGHPLLVGEILKTECGKFIVVKGKAEDVATAIADDWLSFSKICYHLGNRHTSLQIGERWVRFKPDHVLEELAENYGLSINKTPAVFEPESGAYGKSGHNHGHSHSHED.

Residues 134-154 (PESGAYGKSGHNHGHSHSHED) form a disordered region. Residues 143-154 (GHNHGHSHSHED) show a composition bias toward basic residues.

This sequence belongs to the UreE family.

Its subcellular location is the cytoplasm. In terms of biological role, involved in urease metallocenter assembly. Binds nickel. Probably functions as a nickel donor during metallocenter assembly. This is Urease accessory protein UreE from Alteromonas mediterranea (strain DSM 17117 / CIP 110805 / LMG 28347 / Deep ecotype).